We begin with the raw amino-acid sequence, 65 residues long: Large ribosomal subunit protein uL30 (65 aa).

Belongs to the universal ribosomal protein uL30 family. As to quaternary structure, part of the 50S ribosomal subunit.

The protein is Large ribosomal subunit protein uL30 of Onion yellows phytoplasma (strain OY-M).